We begin with the raw amino-acid sequence, 251 residues long: Tyrosine phosphatase-like protein J3 (251 aa).

The 226-residue stretch at 26–251 (IADEYYTIVP…PVLQNSKRRE (226 aa)) folds into the Tyrosine-protein phosphatase domain.

The protein belongs to the protein-tyrosine phosphatase family.

The polypeptide is Tyrosine phosphatase-like protein J3 (J4) (Microplitis demolitor (Parasitoid wasp)).